The primary structure comprises 227 residues: Ras-related protein Rab-3C (227 aa).

Positions 39, 42, 43, 44, 45, 56, 57, 61, and 62 each coordinate GTP. Thr-44 contributes to the Mg(2+) binding site. Positions 53 to 66 (DSFTSAFVSTVGID) match the Switch 1 motif. Mg(2+) is bound by residues Thr-62 and Asp-85. Thr-86 carries the post-translational modification Phosphothreonine. The Switch 2 signature appears at 86–104 (TAGQERYRTITTAYYRGAM). 6 residues coordinate GTP: Gly-88, Asn-143, Lys-144, Asp-146, Ala-174, and Lys-175. Phosphoserine occurs at positions 196 and 198. Thr-206 carries the phosphothreonine modification. Residues Cys-225 and Cys-227 are each lipidated (S-geranylgeranyl cysteine). The residue at position 227 (Cys-227) is a Cysteine methyl ester.

This sequence belongs to the small GTPase superfamily. Rab family. Interacts with RIMS1, RIMS2, RPH3A and RPH3AL. The GTP-bound form interacts with REP15. Interacts with GDI2, CHM and CHML; phosphorylation at Thr-86 disrupts these interactions. Interacts with MADD (via uDENN domain); the GTP-bound form is preferred for interaction. The cofactor is Mg(2+). In terms of processing, phosphorylation of Thr-86 in the switch II region by LRRK2 prevents the association of RAB regulatory proteins, including CHM, CHML and RAB GDP dissociation inhibitor GDI2.

It is found in the cell membrane. It carries out the reaction GTP + H2O = GDP + phosphate + H(+). Its activity is regulated as follows. Regulated by guanine nucleotide exchange factors (GEFs) which promote the exchange of bound GDP for free GTP. Regulated by GTPase activating proteins (GAPs) which increase the GTP hydrolysis activity. Inhibited by GDP dissociation inhibitors (GDIs) which prevent Rab-GDP dissociation. Functionally, the small GTPases Rab are key regulators of intracellular membrane trafficking, from the formation of transport vesicles to their fusion with membranes. Rabs cycle between an inactive GDP-bound form and an active GTP-bound form that is able to recruit to membranes different sets of downstream effectors directly responsible for vesicle formation, movement, tethering and fusion. In Bos taurus (Bovine), this protein is Ras-related protein Rab-3C (RAB3C).